Here is an 859-residue protein sequence, read N- to C-terminus: Replication origin-binding protein (859 aa).

The 166-residue stretch at 70–235 folds into the Helicase ATP-binding domain; that stretch reads PLAADARRVT…AALRGAGSVH (166 aa). Residue 83–90 coordinates ATP; the sequence is APMGSGKT.

Belongs to the herpesviridae OriBP family. As to quaternary structure, homodimer. Interacts with the major DNA-binding protein. Interacts with the helicase/primase component UL8 and the polymerase accessory protein.

The protein localises to the host nucleus. Functionally, functions as a docking protein to recruit essential components of the viral replication machinery to viral DNA origins. In the presence of the major DNA-binding protein, opens dsDNA leading to a conformational change in the origin that facilitates DNA unwinding and subsequent replication. This chain is Replication origin-binding protein (UL9), found in Bovine herpesvirus 1.1 (strain Cooper) (BoHV-1).